A 173-amino-acid chain; its full sequence is NADH-ubiquinone oxidoreductase chain 6 (173 aa).

The next 5 membrane-spanning stretches (helical) occupy residues 1–21, 27–47, 48–68, 87–107, and 139–159; these read MTYF…AVAS, YGVV…MSLG, MSFV…VVFV, VVGY…VGGL, and CGVG…FVVL.

The protein belongs to the complex I subunit 6 family.

The protein resides in the mitochondrion membrane. It catalyses the reaction a ubiquinone + NADH + 5 H(+)(in) = a ubiquinol + NAD(+) + 4 H(+)(out). In terms of biological role, core subunit of the mitochondrial membrane respiratory chain NADH dehydrogenase (Complex I) that is believed to belong to the minimal assembly required for catalysis. Complex I functions in the transfer of electrons from NADH to the respiratory chain. The immediate electron acceptor for the enzyme is believed to be ubiquinone. This is NADH-ubiquinone oxidoreductase chain 6 (MT-ND6) from Synthliboramphus antiquus (Ancient murrelet).